The primary structure comprises 61 residues: Bowman-Birk type proteinase inhibitor B5 (61 aa).

6 cysteine pairs are disulfide-bonded: cysteine 5-cysteine 60, cysteine 6-cysteine 22, cysteine 9-cysteine 56, cysteine 12-cysteine 20, cysteine 29-cysteine 36, and cysteine 33-cysteine 48.

It belongs to the Bowman-Birk serine protease inhibitor family. In terms of tissue distribution, expressed in bulb (at protein level).

Functionally, serine protease inhibitor. Inhibits trypsin (Ki = 41 nM) and weakly inhibits chymotrypsin (Ki = 410 nM). Does not inhibit bacterial subtilisin. This Hyacinthus orientalis (Common hyacinth) protein is Bowman-Birk type proteinase inhibitor B5.